The primary structure comprises 214 residues: Thymidylate kinase (214 aa).

Residue 10–17 (GIDGCGKT) coordinates ATP.

Belongs to the thymidylate kinase family.

It carries out the reaction dTMP + ATP = dTDP + ADP. Its function is as follows. Phosphorylation of dTMP to form dTDP in both de novo and salvage pathways of dTTP synthesis. The polypeptide is Thymidylate kinase (Prochlorococcus marinus subsp. pastoris (strain CCMP1986 / NIES-2087 / MED4)).